The sequence spans 215 residues: Glycerol-3-phosphate acyltransferase (215 aa).

5 helical membrane passes run 1-21 (MAFL…SIPT), 57-77 (IFVL…VKLW), 85-105 (MIPL…AVLG), 126-146 (VLLV…LAML), and 165-185 (VLMF…IVGL).

This sequence belongs to the PlsY family. As to quaternary structure, probably interacts with PlsX.

It localises to the cell inner membrane. The catalysed reaction is an acyl phosphate + sn-glycerol 3-phosphate = a 1-acyl-sn-glycero-3-phosphate + phosphate. The protein operates within lipid metabolism; phospholipid metabolism. In terms of biological role, catalyzes the transfer of an acyl group from acyl-phosphate (acyl-PO(4)) to glycerol-3-phosphate (G3P) to form lysophosphatidic acid (LPA). This enzyme utilizes acyl-phosphate as fatty acyl donor, but not acyl-CoA or acyl-ACP. This Crocosphaera subtropica (strain ATCC 51142 / BH68) (Cyanothece sp. (strain ATCC 51142)) protein is Glycerol-3-phosphate acyltransferase.